The sequence spans 505 residues: MPLILSITSSGTVLVLLTLLSLAAVVILSTYRLIKYRHIPGPLLCRVSHHYVTLFDLLRQRPQTVAKWHRQYGPFVQIAPGQVSISDVTAMRELYSSSARNPKSGYFDNFLYHNARAIFAEKEYLGHREKRGLVSSFFQATSVYKPDIQQPLRDRVLAAMMRIEENIITSGQGVVDVMPIINHYAWDNTTSLVFGPCHSSQALQGDENDRNLLARLKNSEMWGAVKNNLPIVFSGIKLAVAVYTRSTKYFSAEDDLDKWAMQRLYKTTSDPKSSQDERSIVQLIQHLRQNGRPLSDSYLESEIIDNLYAGQATVTVALTYAVYHLSRNPYWQSMVQRELDGLPRDADGLPNWTLLNKAPILEACIRESYRLNPVASGRAERVLARDSRYGDIFIPQNTIVSASTIALHLDPQVWLNPREFNPRRWLDATPDEILRLERSFIPFGYGARLCLGKAFANLQIKMFVAAIYSKDNTGLEIPGQTMEQWGTQDALPKGLKCRLRFEERK.

The first 23 residues, 1-23 (MPLILSITSSGTVLVLLTLLSLA), serve as a signal peptide directing secretion. Asn-188 and Asn-351 each carry an N-linked (GlcNAc...) asparagine glycan. Cys-450 is a binding site for heme.

This sequence belongs to the cytochrome P450 family. Heme serves as cofactor.

Its pathway is secondary metabolite biosynthesis. Its function is as follows. Cytochrome P450 monooxygenase; part of the Fg3_54/C64 gene cluster that mediates the biosynthesis of the octapeptide fusaoctaxin A, a virulence factor that is required for cell-to-cell invasiveness of plant host. The 2 nonribosomal peptide synthetases NRPS9 and NRPS5 form an assembly line which likely utilizes GABA as a starter unit (loaded on the unique module M1 of NRPS9) and sequentially incorporates seven extender units composed of the residues L-Ala, L-allo-Ile, L-Ser, L-Val, L-Ser, L-Leu and L-Leu, respectively. During the process, each of the residues that are tethered on modules M3-M7 of NRPS5 containing an E domain can undergo an epimerization reaction to produce a D-configuration before the transpeptidation reaction occurs. The elongation of the peptidyl chain might be terminated by module M8-mediated L-Leu incorporation, followed by R domain-catalyzed 4 electron reduction to release the resulting octapeptide from the assembly line as an alcohol. Fusaoctaxin A is cleaved by the cluster specific ABC transporter FGM5 to the pentapeptide fusapentaxin A and the tripeptide fusatrixin A. The other enzymes from the cluster, FGM1, FGM2, FGM3 and FGM9 seem not to be involved in the biosynthesis of fusaoctaxin A and their functions have still to be determined. This chain is Cytochrome P450 monooxygenase FGM1, found in Gibberella zeae (strain ATCC MYA-4620 / CBS 123657 / FGSC 9075 / NRRL 31084 / PH-1) (Wheat head blight fungus).